The chain runs to 371 residues: Maltose/maltodextrin import ATP-binding protein MalK (371 aa).

Residues 4–234 (VQLQNVTKAW…PADRFVAGFI (231 aa)) form the ABC transporter domain. 36 to 43 (GPSGCGKS) contacts ATP.

Belongs to the ABC transporter superfamily. Maltooligosaccharide importer (TC 3.A.1.1.1) family. In terms of assembly, the complex is composed of two ATP-binding proteins (MalK), two transmembrane proteins (MalG and MalK) and a solute-binding protein (MalE).

The protein resides in the cell inner membrane. The enzyme catalyses D-maltose(out) + ATP + H2O = D-maltose(in) + ADP + phosphate + H(+). Its function is as follows. Part of the ABC transporter complex MalEFGK involved in maltose/maltodextrin import. Responsible for energy coupling to the transport system. The sequence is that of Maltose/maltodextrin import ATP-binding protein MalK from Escherichia coli O6:H1 (strain CFT073 / ATCC 700928 / UPEC).